Reading from the N-terminus, the 231-residue chain is uncharacterized protein (231 aa).

The first 19 residues, M1–A19, serve as a signal peptide directing secretion. C20 is lipidated: N-palmitoyl cysteine. Residue C20 is the site of S-diacylglycerol cysteine attachment.

It belongs to the MG439/MG440 family.

The protein resides in the cell membrane. This is an uncharacterized protein from Mycoplasma pneumoniae (strain ATCC 29342 / M129 / Subtype 1) (Mycoplasmoides pneumoniae).